A 347-amino-acid polypeptide reads, in one-letter code: Probable cytosolic iron-sulfur protein assembly protein 1 (347 aa).

7 WD repeats span residues 11–48, 62–101, 122–161, 168–207, 212–255, 266–304, and 311–347; these read LHNEKIWDIDCYKGLLATASTDRRIKIVNIGDIGDGLV, SHKKTVRSVAWRPHSTILAAGSFDSTVSIWAKDENDGDAD, GHENEVKSVAWSKDGYFLATCSRDKSVWIWESDEMGEEYE, EHSQDVKHVVWHPFKDILASSSYDDTIRIWKEYDDDWEAA, GHEG…SIEE, VHGKPVYSVSWSEDGLIASAGSDGMLVIYKENKDNVWEV, and SHSIYEINVVKWIKLNNGKSYLATAGDDGYVNIWAYN.

This sequence belongs to the WD repeat CIA1 family. In terms of assembly, interacts with NAR1.

The protein resides in the cytoplasm. It is found in the nucleus. Its function is as follows. Essential component of the cytosolic iron-sulfur (Fe/S) protein assembly machinery. Required for the maturation of extramitochondrial Fe/S proteins. The sequence is that of Probable cytosolic iron-sulfur protein assembly protein 1 from Vanderwaltozyma polyspora (strain ATCC 22028 / DSM 70294 / BCRC 21397 / CBS 2163 / NBRC 10782 / NRRL Y-8283 / UCD 57-17) (Kluyveromyces polysporus).